A 171-amino-acid chain; its full sequence is Ribosome maturation factor RimM (171 aa).

Residues 97–170 form the PRC barrel domain; sequence EGEYYYHEII…LVTIHVMEGL (74 aa).

This sequence belongs to the RimM family. In terms of assembly, binds ribosomal protein uS19.

It localises to the cytoplasm. Functionally, an accessory protein needed during the final step in the assembly of 30S ribosomal subunit, possibly for assembly of the head region. Essential for efficient processing of 16S rRNA. May be needed both before and after RbfA during the maturation of 16S rRNA. It has affinity for free ribosomal 30S subunits but not for 70S ribosomes. This is Ribosome maturation factor RimM from Bacillus thuringiensis (strain Al Hakam).